The sequence spans 353 residues: Probable arabinan endo-1,5-alpha-L-arabinosidase B (353 aa).

The first 16 residues, 1–16 (MVLVATLFSLFTVSLC), serve as a signal peptide directing secretion. Catalysis depends on Asp-39, which acts as the Proton acceptor. Asn-194 is a glycosylation site (N-linked (GlcNAc...) asparagine). Residues 202–227 (HLAKHPKTERVNSQDQNPDPLCRDSS) form a disordered region. The Proton donor role is filled by Glu-233.

The protein belongs to the glycosyl hydrolase 43 family.

It localises to the secreted. It carries out the reaction Endohydrolysis of (1-&gt;5)-alpha-arabinofuranosidic linkages in (1-&gt;5)-arabinans.. It participates in glycan metabolism; L-arabinan degradation. Its function is as follows. Endo-1,5-alpha-L-arabinanase involved in degradation of pectin. Its preferred substrate is linear 1,5-alpha-L-arabinan. The polypeptide is Probable arabinan endo-1,5-alpha-L-arabinosidase B (abnB) (Aspergillus oryzae (strain ATCC 42149 / RIB 40) (Yellow koji mold)).